Consider the following 84-residue polypeptide: RNA-binding protein Hfq (84 aa).

The Sm domain occupies 9-69 (DRFLNILRTN…VSTIMPESFV (61 aa)).

Belongs to the Hfq family. In terms of assembly, homohexamer.

RNA chaperone that binds small regulatory RNA (sRNAs) and mRNAs to facilitate mRNA translational regulation in response to envelope stress, environmental stress and changes in metabolite concentrations. Also binds with high specificity to tRNAs. The protein is RNA-binding protein Hfq of Thermosipho africanus (strain TCF52B).